Here is a 208-residue protein sequence, read N- to C-terminus: Superoxide dismutase [Mn] 2 (208 aa).

Residues histidine 28, histidine 83, aspartate 165, and histidine 169 each coordinate Mn(2+).

It belongs to the iron/manganese superoxide dismutase family. As to quaternary structure, homodimer. It depends on Mn(2+) as a cofactor.

It carries out the reaction 2 superoxide + 2 H(+) = H2O2 + O2. In terms of biological role, destroys superoxide anion radicals which are normally produced within the cells and which are toxic to biological systems. The sequence is that of Superoxide dismutase [Mn] 2 (sodA2) from Bacillus cereus (strain ATCC 14579 / DSM 31 / CCUG 7414 / JCM 2152 / NBRC 15305 / NCIMB 9373 / NCTC 2599 / NRRL B-3711).